A 420-amino-acid chain; its full sequence is Gamma-glutamyl phosphate reductase (420 aa).

It belongs to the gamma-glutamyl phosphate reductase family.

The protein localises to the cytoplasm. It catalyses the reaction L-glutamate 5-semialdehyde + phosphate + NADP(+) = L-glutamyl 5-phosphate + NADPH + H(+). It functions in the pathway amino-acid biosynthesis; L-proline biosynthesis; L-glutamate 5-semialdehyde from L-glutamate: step 2/2. Catalyzes the NADPH-dependent reduction of L-glutamate 5-phosphate into L-glutamate 5-semialdehyde and phosphate. The product spontaneously undergoes cyclization to form 1-pyrroline-5-carboxylate. The sequence is that of Gamma-glutamyl phosphate reductase from Chlorobaculum parvum (strain DSM 263 / NCIMB 8327) (Chlorobium vibrioforme subsp. thiosulfatophilum).